A 284-amino-acid chain; its full sequence is 2-dehydro-3-deoxyphosphooctonate aldolase (284 aa).

The protein belongs to the KdsA family.

The protein localises to the cytoplasm. The catalysed reaction is D-arabinose 5-phosphate + phosphoenolpyruvate + H2O = 3-deoxy-alpha-D-manno-2-octulosonate-8-phosphate + phosphate. It functions in the pathway carbohydrate biosynthesis; 3-deoxy-D-manno-octulosonate biosynthesis; 3-deoxy-D-manno-octulosonate from D-ribulose 5-phosphate: step 2/3. It participates in bacterial outer membrane biogenesis; lipopolysaccharide biosynthesis. The chain is 2-dehydro-3-deoxyphosphooctonate aldolase from Yersinia enterocolitica serotype O:8 / biotype 1B (strain NCTC 13174 / 8081).